The chain runs to 238 residues: Ribitol-5-phosphate cytidylyltransferase (238 aa).

CTP contacts are provided by residues 7-10 (LAGG) and 81-87 (GDDRNHS).

This sequence belongs to the IspD/TarI cytidylyltransferase family. TarI subfamily.

It catalyses the reaction D-ribitol 5-phosphate + CTP + H(+) = CDP-L-ribitol + diphosphate. It participates in cell wall biogenesis; poly(ribitol phosphate) teichoic acid biosynthesis. Functionally, catalyzes the transfer of the cytidylyl group of CTP to D-ribitol 5-phosphate. The polypeptide is Ribitol-5-phosphate cytidylyltransferase (Staphylococcus epidermidis (strain ATCC 12228 / FDA PCI 1200)).